The sequence spans 89 residues: Small ribosomal subunit protein uS15 (89 aa).

This sequence belongs to the universal ribosomal protein uS15 family. In terms of assembly, part of the 30S ribosomal subunit. Forms a bridge to the 50S subunit in the 70S ribosome, contacting the 23S rRNA.

In terms of biological role, one of the primary rRNA binding proteins, it binds directly to 16S rRNA where it helps nucleate assembly of the platform of the 30S subunit by binding and bridging several RNA helices of the 16S rRNA. Forms an intersubunit bridge (bridge B4) with the 23S rRNA of the 50S subunit in the ribosome. This Thiobacillus denitrificans (strain ATCC 25259 / T1) protein is Small ribosomal subunit protein uS15.